The chain runs to 1043 residues: Rho GTPase-activating protein gacZ (1043 aa).

The disordered stretch occupies residues 1 to 44; sequence MTTTNTSIFGPRVNNSKFNNNNNNNNNNNNNNNNTSNNNNSNII. The segment covering 14–44 has biased composition (low complexity); the sequence is NNSKFNNNNNNNNNNNNNNNNTSNNNNSNII. Cys-71, Cys-74, Cys-82, Cys-85, Cys-91, His-95, His-103, and Cys-107 together coordinate Zn(2+). The MYND-type; atypical zinc finger occupies 71–107; the sequence is CVICKSKNVQVCTGCLMVYYCGAEHQNIDWPNHKSLC. Disordered regions lie at residues 137–163, 199–532, 546–594, 614–690, 706–772, and 801–842; these read SGNRVSNSNNNSSIYSNSTGNINNNNN, HLQQ…NNSN, DGLS…NGNR, FYQS…TNNN, NTSQ…QLSA, and NKVS…NNNN. The span at 201 to 225 shows a compositional bias: low complexity; sequence QQQIQQTQQTQQQPPPTTTSIPTQP. Residues 241 to 253 are compositionally biased toward polar residues; it reads SFKSSSSGDNTPI. Composition is skewed to low complexity over residues 254-293 and 307-411; these read NQSPSSSSSSLVSSTNNNNNNNNNNNNNNNINSNSNNMSG and NSIN…TNEE. Polar residues predominate over residues 453-466; sequence GTLKQSSSSDSIYF. Composition is skewed to low complexity over residues 467–532 and 547–594; these read NNNN…NNSN and GLSY…NGNR. The segment covering 615 to 625 has biased composition (polar residues); it reads YQSNKNQSNGY. Residues 644-671 are compositionally biased toward acidic residues; the sequence is ENDDSHEECDDDDDDDDGGGQDGDDGLD. Composition is skewed to low complexity over residues 726–736, 752–771, 801–821, and 829–842; these read DTQSQSTNSTT, SSDDLQQQQTQTQQQQSQLS, NKVSEVTSKSKSSTSVNNNNN, and NNNNNNNNINNNNN. A coiled-coil region spans residues 825 to 852; that stretch reads DHNENNNNNNNNINNNNNNNNNNIENII. The Rho-GAP domain maps to 855–1043; sequence IPLEEAVKKS…FGIQTYNYNS (189 aa).

It localises to the cytoplasm. Its function is as follows. Rho GTPase-activating protein involved in the signal transduction pathway. In Dictyostelium discoideum (Social amoeba), this protein is Rho GTPase-activating protein gacZ (gacZ).